The following is a 383-amino-acid chain: Protein RecA (383 aa).

79–86 (GPESSGKT) lines the ATP pocket. The segment at 347–369 (IEEDNTEEKQSSKEKETDEKADK) is disordered. Residues 353–369 (EEKQSSKEKETDEKADK) are compositionally biased toward basic and acidic residues.

The protein belongs to the RecA family.

It is found in the cytoplasm. In terms of biological role, can catalyze the hydrolysis of ATP in the presence of single-stranded DNA, the ATP-dependent uptake of single-stranded DNA by duplex DNA, and the ATP-dependent hybridization of homologous single-stranded DNAs. It interacts with LexA causing its activation and leading to its autocatalytic cleavage. The sequence is that of Protein RecA from Streptococcus mutans serotype c (strain ATCC 700610 / UA159).